The primary structure comprises 963 residues: MPGAGARAEEGGGGGEGAAQGAAAEPGAGPAREPARLCGYLQKLSGKGPLRGYRSRWFVFDARRCYLYYFKSPQDALPLGHLDIADACFSYQGPDEAAEPGTEPPAHFQVHSAGAVTVLKAPNRQLMTYWLQELQQKRWEYCNSLDMVKWDSRTSPTPGDFPKGLVARDNTDLIYPHPNASAEKARNVLAVETVPGELVGEQAANQPAPGHPNSINFYSLKQWGNELKNSMSSFRPGRGHNDSRRTVFYTNEEWELLDPTPKDLEESIVQEEKKKLTPEGNKGVTGSGFPFDFGRNPYKGKRPLKDIIGSYKNRHSSGDPSSEGTSGSGSVSIRKPASEMQLQVQSQQEELEQLKKDLSSQKELVRLLQQTVRSSQYDKYFTSSRLCEGVPKDTLELLHQKDDQILGLTSQLERFSLEKESLQQEVRTLKSKVGELNEQLGMLMETIQAKDEVIIKLSEGEGNGPPPTVAPSSPSVVPVARDQLELDRLKDNLQGYKTQNKFLNKEILELSALRRNAERRERDLMAKYSSLEAKLCQIESKYLILLQEMKTPVCSEDQGPTREVIAQLLEDALQVESQEQPEQAFVKPHLVSEYDIYGFRTVPEDDEEEKLVAKVRALDLKTLYLTENQEVSTGVKWENYFASTVNREMMCSPELKNLIRAGIPHEHRSKVWKWCVDRHTRKFKDNTEPGHFQTLLQKALEKQNPASKQIELDLLRTLPNNKHYSCPTSEGIQKLRNVLLAFSWRNPDIGYCQGLNRLVAVALLYLEQEDAFWCLVTIVEVFMPRDYYTKTLLGSQVDQRVFRDLMSEKLPRLHGHFEQYKVDYTLITFNWFLVVFVDSVVSDILFKIWDSFLYEGPKVIFRFALALFKYKEEEILKLQDSMSIFKYLRYFTRTILDARKLISISFGDLNPFPLRQIRNRRAYHLEKVRLELTELEAIREDFLRERDTSPDKGELVSDEEEDT.

A disordered region spans residues 1 to 30 (MPGAGARAEEGGGGGEGAAQGAAAEPGAGP). A compositionally biased stretch (low complexity) spans 19 to 30 (AQGAAAEPGAGP). The 106-residue stretch at 34–139 (PARLCGYLQK…WLQELQQKRW (106 aa)) folds into the PH domain. Residues serine 155 and serine 317 each carry the phosphoserine modification. The tract at residues 272–348 (EKKKLTPEGN…EMQLQVQSQQ (77 aa)) is disordered. Over residues 318 to 348 (GDPSSEGTSGSGSVSIRKPASEMQLQVQSQQ) the composition is skewed to low complexity. Residues 337–535 (ASEMQLQVQS…AKYSSLEAKL (199 aa)) are a coiled coil. Phosphoserine is present on serine 473. One can recognise a Rab-GAP TBC domain in the interval 662–856 (GIPHEHRSKV…KIWDSFLYEG (195 aa)). At serine 957 the chain carries Phosphoserine.

The protein resides in the early endosome. Functionally, GTPase-activating protein that plays a role in the early steps of endocytosis. In Homo sapiens (Human), this protein is TBC1 domain family member 2B (TBC1D2B).